Reading from the N-terminus, the 318-residue chain is Cytochrome f (318 aa).

A signal peptide spans 1–34; it reads MKNNYLANLIKTLQAIVVSVALLAPLVLPSAVNA. 4 residues coordinate heme: phenylalanine 35, cysteine 55, cysteine 58, and histidine 59. Residues 284–304 traverse the membrane as a helical segment; the sequence is VKGLIAFFFTVILAQILLVLK.

The protein belongs to the cytochrome f family. In terms of assembly, the 4 large subunits of the cytochrome b6-f complex are cytochrome b6, subunit IV (17 kDa polypeptide, petD), cytochrome f and the Rieske protein, while the 4 small subunits are PetG, PetL, PetM and PetN. The complex functions as a dimer. Heme serves as cofactor.

The protein resides in the plastid. It localises to the chloroplast thylakoid membrane. Component of the cytochrome b6-f complex, which mediates electron transfer between photosystem II (PSII) and photosystem I (PSI), cyclic electron flow around PSI, and state transitions. This Rhodomonas salina (Cryptomonas salina) protein is Cytochrome f.